The following is a 690-amino-acid chain: MGCFESKPDQQVQPVTVRSPTDIFWLVLYVVFWIALIVIAVFSFIYGNPLRIINGYDSFGNTCGVRSNDKFSNFPLSGMNTEDKPYLFFLDIKELRHTLKICVKECPQRELLNAAELYRYYEDRKTKLCRYDFNMSMLQTQEANQGAKYFDFNGPCPPFPVYQSAPVLHRCIPTGVNAPLQQVKKMYALINSWEATQQVFSDLYKAWPTIVLICALSLVFSIVMIALLHWLATIVSWLICIIVVVASVGITGVLWWSYYKAKHTLDTDQQLSYLEELVRNEATIYVLAIAATCIMIILLVVIYYLREKLTGLAALFEEAGKCMLQLPGLAGPPLLAFLALSVFLAFWVVVVVCLATANYPGVKPLLPLAQLEDSASIANDPKLKPELAGKNDTSFKSFKLVEYHDVNVLRHMLWIYIIGLIWTSEFIFACQQLAIAGAVAFWYFRKPTDSPVLLAIAKLVKYHLGSVAKGSLIITIFKIPRLILTYLYAKLKRHQQEGSECASCCLRCCICSFWLLEKFIRYLNHNAYTVIAIEGVNFCPAAKIAWNALVTNALQVATINGIGDFVLFLGKLAVASICGLISILLLRDNPDLHFYMAPVIIITVFAFFIAHIILSLYEMVVDTLFLCVCEDRTINGNSGRWKESNLARLLGEAPEEDAVEAPMQEVQLTPITKQPFSAQFLQAEMENSKA.

A helical transmembrane segment spans residues 23–43; that stretch reads IFWLVLYVVFWIALIVIAVFS. N-linked (GlcNAc...) asparagine glycosylation occurs at asparagine 134. Transmembrane regions (helical) follow at residues 203-223, 237-259, 282-302, and 334-354; these read LYKA…FSIV, WLIC…WSYY, ATIY…LVVI, and LLAF…VVCL. Asparagine 391 carries an N-linked (GlcNAc...) asparagine glycan. 4 helical membrane passes run 415–435, 464–484, 565–585, and 594–614; these read IYII…QLAI, LGSV…RLIL, FVLF…SILL, and FYMA…HIIL.

It belongs to the CTL (choline transporter-like) family.

It localises to the membrane. The protein is Choline transporter-like 1 of Anopheles gambiae (African malaria mosquito).